The sequence spans 381 residues: Creatine kinase B-type (381 aa).

Ser-4 carries the post-translational modification Phosphoserine. Positions 11 to 98 (KLRFPAEDEF…FDPIIEDRHG (88 aa)) constitute a Phosphagen kinase N-terminal domain. A Phosphothreonine modification is found at Thr-35. Lys-45 participates in a covalent cross-link: Glycyl lysine isopeptide (Lys-Gly) (interchain with G-Cter in ubiquitin). Val-72 lines the creatine pocket. Residues 96 to 110 (RHGGYQPSDEHKTDL) are compositionally biased toward basic and acidic residues. Residues 96 to 122 (RHGGYQPSDEHKTDLNPDNLQGGDDLD) form a disordered region. A Glycyl lysine isopeptide (Lys-Gly) (interchain with G-Cter in ubiquitin) cross-link involves residue Lys-107. Phosphotyrosine is present on Tyr-125. The Phosphagen kinase C-terminal domain maps to 125 to 367 (YVLSSRVRTG…KLLIEMEQRL (243 aa)). ATP-binding positions include 128-132 (SSRVR), Arg-130, Arg-132, and His-191. The segment at 130–138 (RVRTGRSIR) is internal MTS-like signal. Position 199 is a phosphoserine (Ser-199). Position 232 (Glu-232) interacts with creatine. Arg-236 is an ATP binding site. Tyr-269 is subject to 3'-nitrotyrosine. Ser-285 lines the creatine pocket. Arg-292 provides a ligand contact to ATP. Ser-309 is modified (phosphoserine). Residues Arg-320, 320 to 325 (RGTGGV), and Asp-335 each bind ATP. Residue Thr-322 is modified to Phosphothreonine. Lys-381 is covalently cross-linked (Glycyl lysine isopeptide (Lys-Gly) (interchain with G-Cter in ubiquitin)).

It belongs to the ATP:guanido phosphotransferase family. As to quaternary structure, dimer of identical or non-identical chains, which can be either B (brain type) or M (muscle type). With MM being the major form in skeletal muscle and myocardium, MB existing in myocardium, and BB existing in many tissues, especially brain. Interacts with SLC12A6 (via C-terminus); the interaction may be required for SLC12A6 potassium-chloride cotransport activity. Ubiquitinated by the ECS(ASB9) complex, leading to its degradation by the proteasome. As to expression, in the kidney localized primarily in the outer medulla in the thick ascending limb and distal convoluted tubule.

Its subcellular location is the cytoplasm. The protein localises to the cytosol. It localises to the mitochondrion. The protein resides in the cell membrane. It carries out the reaction creatine + ATP = N-phosphocreatine + ADP + H(+). In terms of biological role, reversibly catalyzes the transfer of phosphate between ATP and various phosphogens (e.g. creatine phosphate). Creatine kinase isoenzymes play a central role in energy transduction in tissues with large, fluctuating energy demands, such as skeletal muscle, heart, brain and spermatozoa. Acts as a key regulator of adaptive thermogenesis as part of the futile creatine cycle: localizes to the mitochondria of thermogenic fat cells and acts by mediating phosphorylation of creatine to initiate a futile cycle of creatine phosphorylation and dephosphorylation. During the futile creatine cycle, creatine and N-phosphocreatine are in a futile cycle, which dissipates the high energy charge of N-phosphocreatine as heat without performing any mechanical or chemical work. The protein is Creatine kinase B-type (Ckb) of Rattus norvegicus (Rat).